Here is a 215-residue protein sequence, read N- to C-terminus: Small ribosomal subunit protein uS7 (215 aa).

The protein belongs to the universal ribosomal protein uS7 family. Part of the 30S ribosomal subunit.

Functionally, one of the primary rRNA binding proteins, it binds directly to 16S rRNA where it nucleates assembly of the head domain of the 30S subunit. Is located at the subunit interface close to the decoding center. This chain is Small ribosomal subunit protein uS7, found in Thermococcus onnurineus (strain NA1).